A 280-amino-acid chain; its full sequence is Succinate dehydrogenase [ubiquinone] iron-sulfur subunit 2, mitochondrial (280 aa).

The N-terminal 28 residues, 1 to 28, are a transit peptide targeting the mitochondrion; the sequence is MAFGLIGRVVGTKSSRLSTAARLIPARW. Residues 51 to 140 enclose the 2Fe-2S ferredoxin-type domain; that stretch reads FQIYRWNPDN…ETTITPLPHM (90 aa). Positions 101, 106, and 121 each coordinate [2Fe-2S] cluster. A 4Fe-4S ferredoxin-type domain is found at 183–213; the sequence is DRAKLDGMYECILCACCSTSCPSYWWNPESY. Cysteine 193, cysteine 196, and cysteine 199 together coordinate [4Fe-4S] cluster. [3Fe-4S] cluster is bound at residue cysteine 203. Tryptophan 208 is an a ubiquinone binding site. Residues cysteine 250 and cysteine 256 each coordinate [3Fe-4S] cluster. Cysteine 260 is a binding site for [4Fe-4S] cluster.

It belongs to the succinate dehydrogenase/fumarate reductase iron-sulfur protein family. In terms of assembly, component of complex II composed of eight subunits in plants: four classical SDH subunits SDH1, SDH2, SDH3 and SDH4 (a flavoprotein (FP), an iron-sulfur protein (IP), and a cytochrome b composed of a large and a small subunit.), as well as four subunits unknown in mitochondria from bacteria and heterotrophic eukaryotes. It depends on [2Fe-2S] cluster as a cofactor. [3Fe-4S] cluster is required as a cofactor. The cofactor is [4Fe-4S] cluster. In terms of tissue distribution, ubiquitous. Preferentially expressed in flowers, inflorescences and root tips.

Its subcellular location is the mitochondrion inner membrane. The enzyme catalyses a quinone + succinate = fumarate + a quinol. It participates in carbohydrate metabolism; tricarboxylic acid cycle; fumarate from succinate (eukaryal route): step 1/1. Functionally, iron-sulfur protein (IP) subunit of succinate dehydrogenase (SDH) that is involved in complex II of the mitochondrial electron transport chain and is responsible for transferring electrons from succinate to ubiquinone (coenzyme Q). This Arabidopsis thaliana (Mouse-ear cress) protein is Succinate dehydrogenase [ubiquinone] iron-sulfur subunit 2, mitochondrial (SDH2-2).